The following is a 109-amino-acid chain: Thioredoxin (109 aa).

The Thioredoxin domain maps to 2 to 107; the sequence is SISQVIDTSF…LLNTLQKHLK (106 aa). Residues cysteine 31 and cysteine 34 each act as nucleophile in the active site. An intrachain disulfide couples cysteine 31 to cysteine 34.

The protein belongs to the thioredoxin family.

The protein localises to the plastid. It localises to the chloroplast. Participates in various redox reactions through the reversible oxidation of its active center dithiol to a disulfide and catalyzes dithiol-disulfide exchange reactions. The polypeptide is Thioredoxin (trxA) (Griffithsia pacifica (Red alga)).